Here is a 424-residue protein sequence, read N- to C-terminus: Serine--tRNA ligase (424 aa).

Position 230 to 232 (230 to 232 (TAE)) interacts with L-serine. 261-263 (RSE) contributes to the ATP binding site. L-serine is bound at residue Glu-284. 348–351 (EISS) is an ATP binding site. Ser-382 lines the L-serine pocket.

The protein belongs to the class-II aminoacyl-tRNA synthetase family. Type-1 seryl-tRNA synthetase subfamily. Homodimer. The tRNA molecule binds across the dimer.

It is found in the cytoplasm. The catalysed reaction is tRNA(Ser) + L-serine + ATP = L-seryl-tRNA(Ser) + AMP + diphosphate + H(+). It catalyses the reaction tRNA(Sec) + L-serine + ATP = L-seryl-tRNA(Sec) + AMP + diphosphate + H(+). Its pathway is aminoacyl-tRNA biosynthesis; selenocysteinyl-tRNA(Sec) biosynthesis; L-seryl-tRNA(Sec) from L-serine and tRNA(Sec): step 1/1. Its function is as follows. Catalyzes the attachment of serine to tRNA(Ser). Is also able to aminoacylate tRNA(Sec) with serine, to form the misacylated tRNA L-seryl-tRNA(Sec), which will be further converted into selenocysteinyl-tRNA(Sec). This chain is Serine--tRNA ligase, found in Solibacter usitatus (strain Ellin6076).